Reading from the N-terminus, the 643-residue chain is 1-deoxy-D-xylulose-5-phosphate synthase (643 aa).

Thiamine diphosphate-binding positions include histidine 72 and 113 to 115 (GHA). Residue aspartate 144 participates in Mg(2+) binding. Residues 145–146 (GA), asparagine 174, tyrosine 287, and glutamate 370 each bind thiamine diphosphate. Asparagine 174 provides a ligand contact to Mg(2+).

Belongs to the transketolase family. DXPS subfamily. As to quaternary structure, homodimer. Mg(2+) serves as cofactor. The cofactor is thiamine diphosphate.

It carries out the reaction D-glyceraldehyde 3-phosphate + pyruvate + H(+) = 1-deoxy-D-xylulose 5-phosphate + CO2. It participates in metabolic intermediate biosynthesis; 1-deoxy-D-xylulose 5-phosphate biosynthesis; 1-deoxy-D-xylulose 5-phosphate from D-glyceraldehyde 3-phosphate and pyruvate: step 1/1. Its function is as follows. Catalyzes the acyloin condensation reaction between C atoms 2 and 3 of pyruvate and glyceraldehyde 3-phosphate to yield 1-deoxy-D-xylulose-5-phosphate (DXP). The chain is 1-deoxy-D-xylulose-5-phosphate synthase from Prochlorococcus marinus (strain SARG / CCMP1375 / SS120).